The chain runs to 332 residues: MKQILYKLFEHQYLGRDEARTILQNIAQGKYNDVQVASLITVFLMRNISVEELCGFRDALLEMRVPVDLSEFAPIDIVGTGGDGKNTFNISTAACFTVAGAGIPVVKHGNYGATSVSGASNVMEQHGVKFTSDVDQMRRSMEQCNIAYLHAPLFNPALKAVAPIRKGLAVRTFFNMLGPLVNPVLPTYQLLGVYNLPLLRLYTYTYQESKTKFAVVHSLDGYDEISLTNEFKVATCGNEKIYTPEGLGFARYQDTDLDGGQTPEDAAKIFDNIMNNTATEAQKNVVVINAAFAIQVVRPEKTIEECIALAKESLESGRALATLKKFIELNNK.

5-phospho-alpha-D-ribose 1-diphosphate is bound by residues Gly-79, 82–83 (GD), Thr-87, 89–92 (NIST), 107–115 (KHGNYGATS), and Ala-119. Gly-79 serves as a coordination point for anthranilate. Ser-91 contributes to the Mg(2+) binding site. Anthranilate is bound at residue Asn-110. Residue Arg-165 coordinates anthranilate. Residues Asp-223 and Glu-224 each coordinate Mg(2+).

This sequence belongs to the anthranilate phosphoribosyltransferase family. Homodimer. Mg(2+) is required as a cofactor.

It carries out the reaction N-(5-phospho-beta-D-ribosyl)anthranilate + diphosphate = 5-phospho-alpha-D-ribose 1-diphosphate + anthranilate. The protein operates within amino-acid biosynthesis; L-tryptophan biosynthesis; L-tryptophan from chorismate: step 2/5. Catalyzes the transfer of the phosphoribosyl group of 5-phosphorylribose-1-pyrophosphate (PRPP) to anthranilate to yield N-(5'-phosphoribosyl)-anthranilate (PRA). The polypeptide is Anthranilate phosphoribosyltransferase (Bacteroides thetaiotaomicron (strain ATCC 29148 / DSM 2079 / JCM 5827 / CCUG 10774 / NCTC 10582 / VPI-5482 / E50)).